A 161-amino-acid chain; its full sequence is Cyclic pyranopterin monophosphate synthase (161 aa).

Substrate is bound by residues 75–77 (MCH) and 115–116 (ME). D130 is an active-site residue.

This sequence belongs to the MoaC family. As to quaternary structure, homohexamer; trimer of dimers.

The catalysed reaction is (8S)-3',8-cyclo-7,8-dihydroguanosine 5'-triphosphate = cyclic pyranopterin phosphate + diphosphate. The protein operates within cofactor biosynthesis; molybdopterin biosynthesis. Functionally, catalyzes the conversion of (8S)-3',8-cyclo-7,8-dihydroguanosine 5'-triphosphate to cyclic pyranopterin monophosphate (cPMP). In Bacillus thuringiensis subsp. konkukian (strain 97-27), this protein is Cyclic pyranopterin monophosphate synthase.